Here is a 390-residue protein sequence, read N- to C-terminus: 3-ketoacyl-CoA thiolase (390 aa).

Cysteine 95 (acyl-thioester intermediate) is an active-site residue. Active-site proton acceptor residues include histidine 346 and cysteine 376.

The protein belongs to the thiolase-like superfamily. Thiolase family. In terms of assembly, heterotetramer of two alpha chains (FadB) and two beta chains (FadA).

The protein localises to the cytoplasm. The enzyme catalyses an acyl-CoA + acetyl-CoA = a 3-oxoacyl-CoA + CoA. It participates in lipid metabolism; fatty acid beta-oxidation. Functionally, catalyzes the final step of fatty acid oxidation in which acetyl-CoA is released and the CoA ester of a fatty acid two carbons shorter is formed. The chain is 3-ketoacyl-CoA thiolase from Acinetobacter baumannii (strain ATCC 17978 / DSM 105126 / CIP 53.77 / LMG 1025 / NCDC KC755 / 5377).